The primary structure comprises 392 residues: Putative glutamate--cysteine ligase 2 (392 aa).

The segment at 347–367 (AARKHGAAPEPGTRTRGDDGV) is disordered.

It belongs to the glutamate--cysteine ligase type 2 family. YbdK subfamily.

The catalysed reaction is L-cysteine + L-glutamate + ATP = gamma-L-glutamyl-L-cysteine + ADP + phosphate + H(+). Its function is as follows. ATP-dependent carboxylate-amine ligase which exhibits weak glutamate--cysteine ligase activity. The polypeptide is Putative glutamate--cysteine ligase 2 (Corynebacterium jeikeium (strain K411)).